We begin with the raw amino-acid sequence, 203 residues long: Cytochrome c biogenesis CcmF N-terminal-like mitochondrial protein 2 (203 aa).

A run of 2 helical transmembrane segments spans residues 44 to 64 (IWIL…SWWA) and 143 to 163 (IFLW…FYQM).

Belongs to the CcmF/CycK/Ccl1/NrfE/CcsA family. As to quaternary structure, interacts with CCMFC, CCMFN1, CCMH and CYTC-1.

It is found in the mitochondrion inner membrane. Forms a complex with CCMFC, CCMFN1 and CCMH that performs the assembly of heme with c-type apocytochromes in mitochondria. The sequence is that of Cytochrome c biogenesis CcmF N-terminal-like mitochondrial protein 2 from Arabidopsis thaliana (Mouse-ear cress).